The chain runs to 415 residues: Protein maelstrom homolog (415 aa).

The HMG box DNA-binding region spans 4–73 (KKAARNAYFF…DPDSTSTYND (70 aa)). Positions 367–399 (SSDPKYSTDKSERSSFEPRGVKPYQGPSGGGRG) are disordered. Residues 372-386 (YSTDKSERSSFEPRG) are compositionally biased toward basic and acidic residues.

Belongs to the maelstrom family.

It is found in the cytoplasm. It localises to the nucleus. Its function is as follows. Plays a central role during spermatogenesis by repressing transposable elements and preventing their mobilization, which is essential for the germline integrity. Acts via the piRNA metabolic process, which mediates the repression of transposable elements during meiosis by forming complexes composed of piRNAs and Piwi proteins and governs the methylation and subsequent repression of transposons. Its association with piP-bodies suggests a participation in the secondary piRNAs metabolic process. Required for the localization of germ-cell factors to the meiotic nuage. This Xenopus tropicalis (Western clawed frog) protein is Protein maelstrom homolog (mael).